The chain runs to 186 residues: Interferon beta (186 aa).

Positions 1 to 21 are cleaved as a signal peptide; it reads MTGRCILQIALLVCFFTTAHS. Y24 bears the Phosphotyrosine mark. 4 N-linked (GlcNAc...) asparagine glycosylation sites follow: N46, N101, N131, and N136. The cysteines at positions 52 and 161 are disulfide-linked.

It belongs to the alpha/beta interferon family. In terms of assembly, monomer.

The protein localises to the secreted. Type I interferon cytokine that plays a key role in the innate immune response to infection, developing tumors and other inflammatory stimuli. Signals via binding to high-affinity (IFNAR2) and low-affinity (IFNAR1) heterodimeric receptor, activating the canonical Jak-STAT signaling pathway resulting in transcriptional activation or repression of interferon-regulated genes that encode the effectors of the interferon response, such as antiviral proteins, regulators of cell proliferation and differentiation, and immunoregulatory proteins. Signals mostly via binding to a IFNAR1-IFNAR2 heterodimeric receptor, but can also function with IFNAR1 alone and independently of Jak-STAT pathways. Elicits a wide variety of responses, including antiviral and antibacterial activities, and can regulate the development of B-cells, myelopoiesis and lipopolysaccharide (LPS)-inducible production of tumor necrosis factor. Plays a role in neuronal homeostasis by regulating dopamine turnover and protecting dopaminergic neurons: acts by promoting neuronal autophagy and alpha-synuclein clearance, thereby preventing dopaminergic neuron loss. IFNB1 is more potent than interferon-alpha (IFN-alpha) in inducing the apoptotic and antiproliferative pathways required for control of tumor cell growth. This is Interferon beta (IFNB1) from Felis catus (Cat).